We begin with the raw amino-acid sequence, 125 residues long: Protein ApaG (125 aa).

The ApaG domain maps to 1-125; sequence MINSPRVCVQ…FRLAVPTLIH (125 aa).

In Klebsiella pneumoniae (strain 342), this protein is Protein ApaG.